The following is a 473-amino-acid chain: ATP synthase subunit beta (473 aa).

156-163 (GGAGVGKT) contacts ATP.

It belongs to the ATPase alpha/beta chains family. In terms of assembly, F-type ATPases have 2 components, CF(1) - the catalytic core - and CF(0) - the membrane proton channel. CF(1) has five subunits: alpha(3), beta(3), gamma(1), delta(1), epsilon(1). CF(0) has three main subunits: a(1), b(2) and c(9-12). The alpha and beta chains form an alternating ring which encloses part of the gamma chain. CF(1) is attached to CF(0) by a central stalk formed by the gamma and epsilon chains, while a peripheral stalk is formed by the delta and b chains.

It is found in the cell inner membrane. The catalysed reaction is ATP + H2O + 4 H(+)(in) = ADP + phosphate + 5 H(+)(out). Functionally, produces ATP from ADP in the presence of a proton gradient across the membrane. The catalytic sites are hosted primarily by the beta subunits. The sequence is that of ATP synthase subunit beta from Desulfovibrio desulfuricans (strain ATCC 27774 / DSM 6949 / MB).